Reading from the N-terminus, the 1693-residue chain is Latrophilin Cirl (1693 aa).

Over 1–774 (MVLQGAKQRL…LFTMFDGNMR (774 aa)) the chain is Extracellular. In terms of domain architecture, SUEL-type lectin spans 30–119 (ACEGKKLTIE…KYLEAHYQCV (90 aa)). Residues Asn-147, Asn-260, Asn-306, and Asn-345 are each glycosylated (N-linked (GlcNAc...) asparagine). The tract at residues 190–309 (PPATHATPPG…GPSVSSNGSA (120 aa)) is disordered. Polar residues-rich tracts occupy residues 259–269 (SNATAPSNTRI) and 287–309 (KSSPNRTPGTAASGPSVSSNGSA). The segment at 379–406 (SFDEDDEEMAGTSTTTPMSTSGDCLHNS) is disordered. Over residues 390–399 (TSTTTPMSTS) the composition is skewed to low complexity. Asn-405, Asn-662, Asn-710, and Asn-737 each carry an N-linked (GlcNAc...) asparagine glycan. Positions 568–761 (RSVVQKVKNI…AILMDVVDEH (194 aa)) constitute a GAIN-B domain. 2 disulfides stabilise this stretch: Cys-716/Cys-743 and Cys-731/Cys-745. Positions 716 to 761 (CVFWNYIDHAWSANGCSLESTNRTHSVCSCNHLTNFAILMDVVDEH) are GPS. A helical membrane pass occupies residues 775-795 (IFIYISIAICVVFIVIALLTL). Topologically, residues 796 to 808 (KLFNGVFVKSART) are cytoplasmic. The chain crosses the membrane as a helical span at residues 809 to 829 (SIYINIYICLLAIELLFLLGI). Topologically, residues 830-835 (EQTETS) are extracellular. A helical membrane pass occupies residues 836 to 856 (IFCGFITVFLHCAILSGTSWF). The Cytoplasmic portion of the chain corresponds to 857–882 (CYEAFHSYSTLTSDELLLEVDQTPKV). The chain crosses the membrane as a helical span at residues 883-903 (NCYYLLSYGLSLSVVAISLVI). The Extracellular portion of the chain corresponds to 904–927 (NPSTYTQNDYCVLMEANAVFYATF). Residues 928–948 (VAPVLIFFMAAIGYTFLSWII) form a helical membrane-spanning segment. At 949-975 (MCRKSRTGLKTKEHTRLATVRFDIRCS) the chain is on the cytoplasmic side. The chain crosses the membrane as a helical span at residues 976–996 (FVFFLLLSAVWCSAYFYLRGA). Over 997 to 1003 (KMDEDVT) the chain is Extracellular. The chain crosses the membrane as a helical span at residues 1004-1024 (GIYGYNFICFNTLLGLYIFVF). Residues 1025–1693 (HCIQNEKIRR…VRCYLEPLAK (669 aa)) are Cytoplasmic-facing. A disordered region spans residues 1089-1109 (PLGTNDDAHDEQQQQQHMSAT). 3 positions are modified to phosphoserine: Ser-1165, Ser-1256, and Ser-1263. Disordered stretches follow at residues 1237-1264 (KPNSQHGKKKRGGVGAIPASPSGSLHSR), 1279-1362 (KTKP…APPP), 1450-1529 (SRYG…LPPQ), and 1596-1678 (SMRG…SAML). The span at 1307-1323 (QQQQQLRQQRQQQQQQL) shows a compositional bias: low complexity. 2 positions are modified to phosphoserine: Ser-1324 and Ser-1325. Over residues 1337 to 1357 (LHLQHQQQQQQQRRAGGQQQL) the composition is skewed to low complexity. Polar residues predominate over residues 1464 to 1475 (RNQQQQQHSLAQ). Acidic residues-rich tracts occupy residues 1485 to 1498 (DEDDDEDEDDEETT) and 1508 to 1521 (CDEEEEDEESDMED). Residues 1640 to 1663 (QQLQKLSPQSTTSSSSHTSHSNPH) are compositionally biased toward low complexity.

Belongs to the G-protein coupled receptor 2 family. LN-TM7 subfamily. Forms a heterodimer, consisting of a large extracellular region non-covalently linked to a seven-transmembrane moiety. Post-translationally, proteolytically cleaved into 2 subunits, an extracellular subunit and a seven-transmembrane subunit.

It is found in the cell membrane. The sequence is that of Latrophilin Cirl from Drosophila pseudoobscura pseudoobscura (Fruit fly).